A 366-amino-acid chain; its full sequence is NADH-quinone oxidoreductase subunit D (366 aa).

Belongs to the complex I 49 kDa subunit family. In terms of assembly, NDH-1 is composed of 14 different subunits. Subunits NuoB, C, D, E, F, and G constitute the peripheral sector of the complex.

It is found in the cell membrane. The catalysed reaction is a quinone + NADH + 5 H(+)(in) = a quinol + NAD(+) + 4 H(+)(out). Functionally, NDH-1 shuttles electrons from NADH, via FMN and iron-sulfur (Fe-S) centers, to quinones in the respiratory chain. The immediate electron acceptor for the enzyme in this species is believed to be a menaquinone. Couples the redox reaction to proton translocation (for every two electrons transferred, four hydrogen ions are translocated across the cytoplasmic membrane), and thus conserves the redox energy in a proton gradient. In Bacillus cereus (strain ATCC 10987 / NRS 248), this protein is NADH-quinone oxidoreductase subunit D.